Here is a 138-residue protein sequence, read N- to C-terminus: MSGTLLAFDFGTKSIGVAIGQRITGTARPLTAIKAQDGTPDWTLIERLLKEWQPEAVIVGLPLNMDGTEQPLTARARKFANKIHGRFGAVVKLHDERLSTVEARAGLFEHGGFRALNKGSVDSASAVIILESFFEQGF.

The protein belongs to the YqgF nuclease family.

Its subcellular location is the cytoplasm. Functionally, could be a nuclease involved in processing of the 5'-end of pre-16S rRNA. The sequence is that of Putative pre-16S rRNA nuclease from Enterobacter sp. (strain 638).